The sequence spans 243 residues: MDNLNLNKHTSGQFNAELEYIRTQVMSMGGLVEQQLTDAITAMHNQDADLARRVVEGDAKVNMMEIAIDEACVKIIAKRQPTASDLRLVMAIIKTISELERIGDVADKICRTALEKFSQQHQPLLVSLESLGQHTVQMLHDVLDAFARMDLNEAIRIYREDKKVDQEYEGIVRQLMTYMMEDSRTIPSVLTALFCARSIERIGDRCQNICEFIFYYVKGQDFRHIGGDDLEQLLTDHRRVDEA.

The protein belongs to the PhoU family. Homodimer. Interacts with phosphate regulon transcriptional regulatory protein PhoB and ferric uptake regulation protein Fur.

The protein localises to the cytoplasm. Functionally, part of the phosphate (Pho) regulon, which plays a key role in phosphate homeostasis. Encoded together with proteins of the phosphate-specific transport (Pst) system in the polycistronic pstSCAB-phoU operon. PhoU is essential for the repression of the Pho regulon at high phosphate conditions. In this role, it may bind, possibly as a chaperone, to PhoR, PhoB or a PhoR-PhoB complex to promote dephosphorylation of phospho-PhoB, or inhibit formation of the PhoR-PhoB transitory complex. This chain is Phosphate-specific transport system accessory protein PhoU, found in Edwardsiella tarda.